A 430-amino-acid polypeptide reads, in one-letter code: Cortical fragment-lytic enzyme (430 aa).

LysM domains follow at residues 3–47 and 52–96; these read QIVT…ALIV and NNYY…QLYV. Residues 104–430 form the GH18 domain; that stretch reads VESIAYLQPS…VENFTITKKG (327 aa). E219 serves as the catalytic Proton donor.

Belongs to the glycosyl hydrolase 18 family. Chitinase class II subfamily.

The protein localises to the spore cortex. Inhibited by diethylpyrocarbonate. Functionally, N-acetylglucosaminidase involved in cortex peptidoglycan degradation during germination. Cleaves only partially degraded spore peptidoglycans. Recognizes muramic acid delta-lactam residues specific to spore peptidoglycans. The chain is Cortical fragment-lytic enzyme from Bacillus cereus.